A 240-amino-acid chain; its full sequence is Small ribosomal subunit protein uS2 (240 aa).

The protein belongs to the universal ribosomal protein uS2 family.

The sequence is that of Small ribosomal subunit protein uS2 (rpsB) from Pasteurella multocida (strain Pm70).